The sequence spans 113 residues: U11-theraphotoxin-Hhn1r (113 aa).

Positions 1–21 are cleaved as a signal peptide; it reads MNTVRVTFLLVFVLAVSLGQA. A propeptide spanning residues 22-74 is cleaved from the precursor; the sequence is DKDENRMEMQEKTEQGKSYLDFAENLLLQKLEELEAKLLEEDSEESRNSRQKR. The segment at 61–83 is disordered; the sequence is EEDSEESRNSRQKRCIGEGVPCD. 3 cysteine pairs are disulfide-bonded: Cys-75–Cys-90, Cys-82–Cys-95, and Cys-89–Cys-110.

It belongs to the neurotoxin 14 (magi-1) family. 01 (HNTX-16) subfamily. Expressed by the venom gland.

It is found in the secreted. Probable ion channel inhibitor. The polypeptide is U11-theraphotoxin-Hhn1r (Cyriopagopus hainanus (Chinese bird spider)).